The chain runs to 132 residues: Hydrogenase maturation factor HypA (132 aa).

H2 is a Ni(2+) binding site. The Zn(2+) site is built by C74, C77, C91, and C94.

Belongs to the HypA/HybF family.

In terms of biological role, involved in the maturation of [NiFe] hydrogenases. Required for nickel insertion into the metal center of the hydrogenase. The chain is Hydrogenase maturation factor HypA from Synechococcus sp. (strain JA-2-3B'a(2-13)) (Cyanobacteria bacterium Yellowstone B-Prime).